We begin with the raw amino-acid sequence, 280 residues long: Shikimate dehydrogenase (NADP(+)) (280 aa).

Shikimate-binding positions include 20 to 22 and T67; that span reads TLS. Catalysis depends on K71, which acts as the Proton acceptor. The shikimate site is built by N92 and D107. NADP(+) is bound by residues 131-135, 154-159, and L224; these read GAGGA and NRTIDK. Residue Y226 participates in shikimate binding. G247 lines the NADP(+) pocket.

It belongs to the shikimate dehydrogenase family. In terms of assembly, homodimer.

The catalysed reaction is shikimate + NADP(+) = 3-dehydroshikimate + NADPH + H(+). It participates in metabolic intermediate biosynthesis; chorismate biosynthesis; chorismate from D-erythrose 4-phosphate and phosphoenolpyruvate: step 4/7. Involved in the biosynthesis of the chorismate, which leads to the biosynthesis of aromatic amino acids. Catalyzes the reversible NADPH linked reduction of 3-dehydroshikimate (DHSA) to yield shikimate (SA). The polypeptide is Shikimate dehydrogenase (NADP(+)) (Carboxydothermus hydrogenoformans (strain ATCC BAA-161 / DSM 6008 / Z-2901)).